The primary structure comprises 169 residues: Crossover junction endodeoxyribonuclease RuvC (169 aa).

Catalysis depends on residues Asp15, Glu75, and Asp147. Mg(2+) is bound by residues Asp15, Glu75, and Asp147.

The protein belongs to the RuvC family. Homodimer which binds Holliday junction (HJ) DNA. The HJ becomes 2-fold symmetrical on binding to RuvC with unstacked arms; it has a different conformation from HJ DNA in complex with RuvA. In the full resolvosome a probable DNA-RuvA(4)-RuvB(12)-RuvC(2) complex forms which resolves the HJ. The cofactor is Mg(2+).

Its subcellular location is the cytoplasm. The enzyme catalyses Endonucleolytic cleavage at a junction such as a reciprocal single-stranded crossover between two homologous DNA duplexes (Holliday junction).. Functionally, the RuvA-RuvB-RuvC complex processes Holliday junction (HJ) DNA during genetic recombination and DNA repair. Endonuclease that resolves HJ intermediates. Cleaves cruciform DNA by making single-stranded nicks across the HJ at symmetrical positions within the homologous arms, yielding a 5'-phosphate and a 3'-hydroxyl group; requires a central core of homology in the junction. The consensus cleavage sequence is 5'-(A/T)TT(C/G)-3'. Cleavage occurs on the 3'-side of the TT dinucleotide at the point of strand exchange. HJ branch migration catalyzed by RuvA-RuvB allows RuvC to scan DNA until it finds its consensus sequence, where it cleaves and resolves the cruciform DNA. This Caulobacter vibrioides (strain ATCC 19089 / CIP 103742 / CB 15) (Caulobacter crescentus) protein is Crossover junction endodeoxyribonuclease RuvC.